Here is a 429-residue protein sequence, read N- to C-terminus: MREEELIQEEKAANRLDTADPGHRHLFHVPPADGGRYQQAAYLAGNSLGLQPRATRDELFADLEAWRRLGVEGHLAADRPWLPYHELLTAPTARLVGARPAEVVVMNSLTVNLHLLMVSFYRPTGVRTRIVIEDSAFPSDSYAVRSQARFHGLDPDSTVVRLAPRPGEDTLRTADVRDLLAAEGDTIALVLLGGVNYLTGELMEIPEITAAGRAAGAVVGWDLAHAAGNVPLALHDWDVDFAAWCSYKYLNSGPGGLSGVFVHERHLADPTLPRFEGWWSTEAATRFEMSPVARPPATAEAWQVSNPPILAMGPVRTSLEVFDSVGMTALRERSVRLTGYLEWLLDQVTPGRPLAVVTPRDPDRRGAQLSVRIGTGSAAELAKRLRLEHGVVADAREPDVVRFAPVPLYSTYHDCWRVADALAATVEVH.

Pyridoxal 5'-phosphate contacts are provided by residues Leu-109, Thr-110, 137–140 (FPSD), Asp-222, His-225, and Tyr-247. Lys-248 carries the N6-(pyridoxal phosphate)lysine modification. Positions 278 and 306 each coordinate pyridoxal 5'-phosphate.

Belongs to the kynureninase family. As to quaternary structure, homodimer. It depends on pyridoxal 5'-phosphate as a cofactor.

It catalyses the reaction L-kynurenine + H2O = anthranilate + L-alanine + H(+). The catalysed reaction is 3-hydroxy-L-kynurenine + H2O = 3-hydroxyanthranilate + L-alanine + H(+). It functions in the pathway amino-acid degradation; L-kynurenine degradation; L-alanine and anthranilate from L-kynurenine: step 1/1. It participates in cofactor biosynthesis; NAD(+) biosynthesis; quinolinate from L-kynurenine: step 2/3. In terms of biological role, catalyzes the cleavage of L-kynurenine (L-Kyn) and L-3-hydroxykynurenine (L-3OHKyn) into anthranilic acid (AA) and 3-hydroxyanthranilic acid (3-OHAA), respectively. This chain is Kynureninase, found in Salinispora tropica (strain ATCC BAA-916 / DSM 44818 / JCM 13857 / NBRC 105044 / CNB-440).